Reading from the N-terminus, the 646-residue chain is 1-deoxy-D-xylulose-5-phosphate synthase (646 aa).

Thiamine diphosphate-binding positions include His-86 and 127-129; that span reads AHS. Asp-158 is a Mg(2+) binding site. Thiamine diphosphate is bound by residues 159 to 160, Asn-188, Tyr-295, and Glu-377; that span reads GA. Asn-188 is a Mg(2+) binding site.

Belongs to the transketolase family. DXPS subfamily. Homodimer. Mg(2+) is required as a cofactor. Requires thiamine diphosphate as cofactor.

The enzyme catalyses D-glyceraldehyde 3-phosphate + pyruvate + H(+) = 1-deoxy-D-xylulose 5-phosphate + CO2. Its pathway is metabolic intermediate biosynthesis; 1-deoxy-D-xylulose 5-phosphate biosynthesis; 1-deoxy-D-xylulose 5-phosphate from D-glyceraldehyde 3-phosphate and pyruvate: step 1/1. Its function is as follows. Catalyzes the acyloin condensation reaction between C atoms 2 and 3 of pyruvate and glyceraldehyde 3-phosphate to yield 1-deoxy-D-xylulose-5-phosphate (DXP). This is 1-deoxy-D-xylulose-5-phosphate synthase from Burkholderia cenocepacia (strain HI2424).